Consider the following 333-residue polypeptide: Heat shock transcription factor, X-linked member 4 (333 aa).

The segment at 1–66 (MASQNTEQEY…QDNSPPEDRN (66 aa)) is disordered. Residues 29 to 39 (GSSPDPNPDSS) show a composition bias toward low complexity. A compositionally biased stretch (polar residues) spans 49 to 60 (AMSQDPGSQDNS). A DNA-binding region spans residues 79 to 182 (FRLSFPRKLW…PRLLENIQRK (104 aa)). The disordered stretch occupies residues 227–275 (QGAPSVQGPSGTQSFRRSGMWSKKSATRHPLGNGPPQEPNGPSWEGTSG). Over residues 228-242 (GAPSVQGPSGTQSFR) the composition is skewed to polar residues.

Belongs to the HSF family.

It localises to the nucleus. This chain is Heat shock transcription factor, X-linked member 4, found in Homo sapiens (Human).